Reading from the N-terminus, the 446-residue chain is Minor fimbrium tip subunit Mfa3 (446 aa).

The first 20 residues, 1–20 (MMQLKKRYFALILLLFLWSG), serve as a signal peptide directing secretion. Residue Cys-21 is the site of N-palmitoyl cysteine attachment. Residue Cys-21 is the site of S-diacylglycerol cysteine attachment. The propeptide occupies 21-43 (CDRGVDPQPDPLQPDVYLLVNAR).

It belongs to the bacteroidetes fimbrillin superfamily. FimB/Mfa2 family. In terms of assembly, component of the fimbrium tip. Minor fimbriae are composed of a structural subunit, most often Mfa1, and the accessory subunits Mfa3, Mfa4 and Mfa5. Fimbrium assembly occurs by linear, head-to-tail oligomerization of fimbrial subunits. This is mediated via insertion of a C-terminal beta-strand from one subunit into a groove in the N-terminal domain of the following subunit. Mfa3 is required for Mfa4 and Mfa5 insertion into the fimbrium.

It is found in the fimbrium. The protein localises to the cell outer membrane. Its function is as follows. Tip subunit of the minor fimbriae. These filamentous pili are attached to the cell surface; they mediate biofilm formation, adhesion onto host cells and onto other bacteria that are part of the oral microbiome. They play an important role in invasion of periodontal tissues and are recognized as major virulence factors. Fimbrium subunits from different strains have highly divergent sequences, and this correlates with pathogenicity. The sequence is that of Minor fimbrium tip subunit Mfa3 (mfa3) from Porphyromonas gingivalis (strain ATCC 33277 / DSM 20709 / CIP 103683 / JCM 12257 / NCTC 11834 / 2561).